The following is an 834-amino-acid chain: Translation initiation factor IF-2 (834 aa).

Positions 1–247 are disordered; the sequence is MTEEKKFSGS…STPATVRKEQ (247 aa). Over residues 45 to 101 the composition is skewed to low complexity; it reads GGSRPSRPARPNNNNQNRPNNGGQSQNRNNQNRSNTSTGGQNRSNNGGNRNNRPGSR. Positions 109–125 are enriched in basic and acidic residues; that stretch reads PMIREKKNWSTKPREGQ. Composition is skewed to low complexity over residues 149–165 and 173–201; these read ASAA…ATKP and ATKP…SARN. Positions 224-233 are enriched in basic residues; sequence GSKKSRRIAA. Positions 335 to 504 constitute a tr-type G domain; that stretch reads SRPPVVTIMG…LLQAEVLELK (170 aa). A G1 region spans residues 344–351; the sequence is GHVDHGKT. A GTP-binding site is contributed by 344-351; the sequence is GHVDHGKT. The interval 369-373 is G2; sequence GITQH. The interval 390-393 is G3; sequence DTPG. GTP is bound by residues 390–394 and 444–447; these read DTPGH and NKID. The tract at residues 444 to 447 is G4; the sequence is NKID. A G5 region spans residues 480 to 482; that stretch reads SAK.

It belongs to the TRAFAC class translation factor GTPase superfamily. Classic translation factor GTPase family. IF-2 subfamily.

Its subcellular location is the cytoplasm. Functionally, one of the essential components for the initiation of protein synthesis. Protects formylmethionyl-tRNA from spontaneous hydrolysis and promotes its binding to the 30S ribosomal subunits. Also involved in the hydrolysis of GTP during the formation of the 70S ribosomal complex. This chain is Translation initiation factor IF-2, found in Leuconostoc mesenteroides subsp. mesenteroides (strain ATCC 8293 / DSM 20343 / BCRC 11652 / CCM 1803 / JCM 6124 / NCDO 523 / NBRC 100496 / NCIMB 8023 / NCTC 12954 / NRRL B-1118 / 37Y).